Consider the following 166-residue polypeptide: Ribosome maturation factor RimM (166 aa).

The PRC barrel domain maps to 91–163 (DDGFYDHELE…TCVITPPEGL (73 aa)).

The protein belongs to the RimM family. As to quaternary structure, binds ribosomal protein uS19.

The protein resides in the cytoplasm. Its function is as follows. An accessory protein needed during the final step in the assembly of 30S ribosomal subunit, possibly for assembly of the head region. Essential for efficient processing of 16S rRNA. May be needed both before and after RbfA during the maturation of 16S rRNA. It has affinity for free ribosomal 30S subunits but not for 70S ribosomes. The chain is Ribosome maturation factor RimM from Corynebacterium diphtheriae (strain ATCC 700971 / NCTC 13129 / Biotype gravis).